We begin with the raw amino-acid sequence, 109 residues long: Small ribosomal subunit protein uS17A (109 aa).

The protein belongs to the universal ribosomal protein uS17 family. As to quaternary structure, part of the 30S ribosomal subunit.

Functionally, one of the primary rRNA binding proteins, it binds specifically to the 5'-end of 16S ribosomal RNA. The protein is Small ribosomal subunit protein uS17A of Methanosarcina acetivorans (strain ATCC 35395 / DSM 2834 / JCM 12185 / C2A).